Reading from the N-terminus, the 111-residue chain is Small ribosomal subunit protein bS16 (111 aa).

A disordered region spans residues Met92–Ala111.

It belongs to the bacterial ribosomal protein bS16 family.

This chain is Small ribosomal subunit protein bS16, found in Rickettsia akari (strain Hartford).